The primary structure comprises 734 residues: Photosystem I P700 chlorophyll a apoprotein A2 (734 aa).

8 helical membrane passes run isoleucine 46–alanine 69, leucine 135–glutamine 158, leucine 175–isoleucine 199, isoleucine 273–tyrosine 291, leucine 330–tyrosine 353, alanine 369–isoleucine 395, alanine 417–histidine 439, and phenylalanine 517–valine 535. Cysteine 559 and cysteine 568 together coordinate [4Fe-4S] cluster. The next 2 membrane-spanning stretches (helical) occupy residues alanine 575 to tryptophan 596 and leucine 643 to isoleucine 665. Chlorophyll a-binding residues include histidine 654, methionine 662, and tyrosine 670. Tryptophan 671 contributes to the phylloquinone binding site. Residues leucine 707–alanine 727 traverse the membrane as a helical segment.

Belongs to the PsaA/PsaB family. As to quaternary structure, the PsaA/B heterodimer binds the P700 chlorophyll special pair and subsequent electron acceptors. PSI consists of a core antenna complex that captures photons, and an electron transfer chain that converts photonic excitation into a charge separation. The eukaryotic PSI reaction center is composed of at least 11 subunits. P700 is a chlorophyll a/chlorophyll a' dimer, A0 is one or more chlorophyll a, A1 is one or both phylloquinones and FX is a shared 4Fe-4S iron-sulfur center. serves as cofactor.

Its subcellular location is the plastid. The protein resides in the chloroplast thylakoid membrane. It carries out the reaction reduced [plastocyanin] + hnu + oxidized [2Fe-2S]-[ferredoxin] = oxidized [plastocyanin] + reduced [2Fe-2S]-[ferredoxin]. Its function is as follows. PsaA and PsaB bind P700, the primary electron donor of photosystem I (PSI), as well as the electron acceptors A0, A1 and FX. PSI is a plastocyanin-ferredoxin oxidoreductase, converting photonic excitation into a charge separation, which transfers an electron from the donor P700 chlorophyll pair to the spectroscopically characterized acceptors A0, A1, FX, FA and FB in turn. Oxidized P700 is reduced on the lumenal side of the thylakoid membrane by plastocyanin. This chain is Photosystem I P700 chlorophyll a apoprotein A2, found in Nicotiana tabacum (Common tobacco).